Here is a 550-residue protein sequence, read N- to C-terminus: Chaperonin GroEL (550 aa).

Residues 30–33 (TLGP), Lys-51, 87–91 (DGTTT), Gly-415, and Asp-496 contribute to the ATP site.

Belongs to the chaperonin (HSP60) family. Forms a cylinder of 14 subunits composed of two heptameric rings stacked back-to-back. Interacts with the co-chaperonin GroES.

Its subcellular location is the cytoplasm. The enzyme catalyses ATP + H2O + a folded polypeptide = ADP + phosphate + an unfolded polypeptide.. Its function is as follows. Together with its co-chaperonin GroES, plays an essential role in assisting protein folding. The GroEL-GroES system forms a nano-cage that allows encapsulation of the non-native substrate proteins and provides a physical environment optimized to promote and accelerate protein folding. The polypeptide is Chaperonin GroEL (Rickettsia typhi (strain ATCC VR-144 / Wilmington)).